The chain runs to 82 residues: Small ribosomal subunit protein uS17 (82 aa).

The protein belongs to the universal ribosomal protein uS17 family. In terms of assembly, part of the 30S ribosomal subunit.

One of the primary rRNA binding proteins, it binds specifically to the 5'-end of 16S ribosomal RNA. This Shewanella denitrificans (strain OS217 / ATCC BAA-1090 / DSM 15013) protein is Small ribosomal subunit protein uS17.